The sequence spans 234 residues: GTP-binding protein ypt4 (234 aa).

Residue 16–23 (GPSGTGKS) coordinates GTP. The Effector region signature appears at 39–47 (SHTVGIDFA). GTP is bound at residue 68 to 72 (DTAGQ). Residues C233 and C234 are each lipidated (S-geranylgeranyl cysteine).

It belongs to the small GTPase superfamily. Rab family.

Its subcellular location is the cell membrane. In Schizosaccharomyces pombe (strain 972 / ATCC 24843) (Fission yeast), this protein is GTP-binding protein ypt4 (ypt4).